Consider the following 356-residue polypeptide: Glycerophosphodiester phosphodiesterase (356 aa).

Residues 1–20 form the signal peptide; sequence MRGTYCVTLWGGVFAALVAG. C21 is lipidated: N-palmitoyl cysteine. C21 carries S-diacylglycerol cysteine lipidation. The 290-residue stretch at 25–314 folds into the GP-PDE domain; sequence RMIVAYRGAA…CHVHTVRKET (290 aa).

This sequence belongs to the glycerophosphoryl diester phosphodiesterase family. Palmitoylated upon expression of a fusion protein with first 40 residues fused to PhoA in E.coli.

Its subcellular location is the cell inner membrane. The catalysed reaction is a sn-glycero-3-phosphodiester + H2O = an alcohol + sn-glycerol 3-phosphate + H(+). Its function is as follows. Glycerophosphoryl diester phosphodiesterase hydrolyzes deacylated phospholipids to G3P and the corresponding alcohols. In terms of biological role, binds human IgA, IgD and the Fc portion of IgG but not IgM, which may contribute to evasion of the human immune system. This is Glycerophosphodiester phosphodiesterase (glpQ) from Treponema pallidum (strain Nichols).